The sequence spans 510 residues: GMP synthase [glutamine-hydrolyzing] (510 aa).

A Glutamine amidotransferase type-1 domain is found at 5–195 (LVFIIDFGGQ…LFNICELKGD (191 aa)). The active-site Nucleophile is the Cys-82. Active-site residues include His-169 and Glu-171. A GMPS ATP-PPase domain is found at 196–385 (WSVTSFAEEK…LGIPHKLVWR (190 aa)). 223 to 229 (SGGVDSS) provides a ligand contact to ATP.

Homodimer.

It carries out the reaction XMP + L-glutamine + ATP + H2O = GMP + L-glutamate + AMP + diphosphate + 2 H(+). Its pathway is purine metabolism; GMP biosynthesis; GMP from XMP (L-Gln route): step 1/1. In terms of biological role, catalyzes the synthesis of GMP from XMP. The protein is GMP synthase [glutamine-hydrolyzing] of Clostridium tetani (strain Massachusetts / E88).